Consider the following 495-residue polypeptide: Cornulin (495 aa).

In terms of domain architecture, EF-hand spans 49–84 (HDPATVDEVLRLLDEDHTGTVEFKEFLVLVFKVAQA). Residues aspartate 62, aspartate 64, threonine 66, threonine 68, and glutamate 73 each contribute to the Ca(2+) site. Disordered regions lie at residues 96 to 439 (ACGS…TVVG) and 460 to 481 (LHTS…KRGI). A compositionally biased stretch (polar residues) spans 99-110 (SQESGSLHSGAS). Positions 137–151 (HRQSQQGSRGQNRPG) are enriched in low complexity. The span at 152–194 (VQTQGQATGSAWVSSYDRQAESQSQERISPQIQLSGQTEQTQK) shows a compositional bias: polar residues. Residues 196–222 (GEGKRNQTTEMRPERQPQTREQDRAHQ) are compositionally biased toward basic and acidic residues. The span at 226 to 242 (TVTGSGTQTQAGATQTV) shows a compositional bias: low complexity. Polar residues-rich tracts occupy residues 243–282 (EQDS…SQAV) and 290–303 (QAGT…QTVE). Over residues 307–324 (SHQTGSTSTQTQESTNGQ) the composition is skewed to low complexity. Residues 334-355 (GRSQTSQAVTGGHTQIQAGSHT) are compositionally biased toward polar residues. Low complexity predominate over residues 374-385 (QGQTQTQPGSGQ). Polar residues-rich tracts occupy residues 403-420 (QAQT…WSST) and 460-473 (LHTS…QDAA).

Belongs to the S100-fused protein family. Homodimer. As to expression, expressed in the basal skin layer (at protein level). Squamous epithelia cell-specific. Expressed in the esophagus (periphery of the cells of the granular and the upper spinous layers), foreskin (granular and lower cornified cells), scalp skin (granular layer), inner root sheath of the hair follicle and in primary keratinocytes (at protein level). Expressed in the squamous epithelium of the cervix, esophagus, foreskin and larynx. Expressed in the fetal bladder and scalp skin. Expressed at very low levels in the lung, kidney, uterus, skeletal muscle, heart and fetal brain. Undetectable or barely detectable in esophageal and oral squamous cell carcinoma compared with the matched adjacent normal esophageal mucosa. Undetectable or barely detectable in larynx and esophagus from patients with pH-documented laryngopharyngeal reflux (LPR).

The protein resides in the cytoplasm. Its function is as follows. Promotes cell proliferation, G1/S cell cycle progression and induces expression of the cell cycle regulator CCND1. Regulates proliferation induced by pro-inflammatory cytokine response via activation of NFKB1 and PI3K/AKT signaling pathways. This chain is Cornulin (CRNN), found in Homo sapiens (Human).